We begin with the raw amino-acid sequence, 250 residues long: Octanoyltransferase (250 aa).

The BPL/LPL catalytic domain maps to 44–224; the sequence is GAGSDRLLLL…AVVQALNGDL (181 aa). Substrate is bound by residues 82–89, 154–156, and 167–169; these read RGGKITWH, AIG, and GIS. Cys-185 functions as the Acyl-thioester intermediate in the catalytic mechanism. The interval 224–250 is disordered; the sequence is LPVRDHDLPRPGTTPAAPNSTRVRSMT. Residues 239-250 show a composition bias toward polar residues; it reads AAPNSTRVRSMT.

Belongs to the LipB family.

Its subcellular location is the cytoplasm. It catalyses the reaction octanoyl-[ACP] + L-lysyl-[protein] = N(6)-octanoyl-L-lysyl-[protein] + holo-[ACP] + H(+). The protein operates within protein modification; protein lipoylation via endogenous pathway; protein N(6)-(lipoyl)lysine from octanoyl-[acyl-carrier-protein]: step 1/2. Functionally, catalyzes the transfer of endogenously produced octanoic acid from octanoyl-acyl-carrier-protein onto the lipoyl domains of lipoate-dependent enzymes. Lipoyl-ACP can also act as a substrate although octanoyl-ACP is likely to be the physiological substrate. This is Octanoyltransferase from Nocardia farcinica (strain IFM 10152).